The sequence spans 292 residues: NAD kinase (292 aa).

Catalysis depends on D73, which acts as the Proton acceptor. NAD(+) is bound by residues D73–G74, N147–E148, H158, R175, D177, T188–S193, and Q247.

Belongs to the NAD kinase family. A divalent metal cation is required as a cofactor.

It is found in the cytoplasm. The enzyme catalyses NAD(+) + ATP = ADP + NADP(+) + H(+). Its function is as follows. Involved in the regulation of the intracellular balance of NAD and NADP, and is a key enzyme in the biosynthesis of NADP. Catalyzes specifically the phosphorylation on 2'-hydroxyl of the adenosine moiety of NAD to yield NADP. The chain is NAD kinase from Salmonella dublin (strain CT_02021853).